The following is a 193-amino-acid chain: Holliday junction branch migration complex subunit RuvA (193 aa).

The tract at residues 1–64 (MIGRIAGILL…EDANLLYGFL (64 aa)) is domain I. The segment at 65-139 (TPQERTTFRE…GKLGADLGEL (75 aa)) is domain II. The segment at 139-143 (LAGAA) is flexible linker. The tract at residues 144 to 193 (SPSDHATDILNALLALGYSEKEGLAAIKNVPAGTGVSEGIKLALKALSKV) is domain III.

It belongs to the RuvA family. As to quaternary structure, homotetramer. Forms an RuvA(8)-RuvB(12)-Holliday junction (HJ) complex. HJ DNA is sandwiched between 2 RuvA tetramers; dsDNA enters through RuvA and exits via RuvB. An RuvB hexamer assembles on each DNA strand where it exits the tetramer. Each RuvB hexamer is contacted by two RuvA subunits (via domain III) on 2 adjacent RuvB subunits; this complex drives branch migration. In the full resolvosome a probable DNA-RuvA(4)-RuvB(12)-RuvC(2) complex forms which resolves the HJ.

The protein resides in the cytoplasm. Its function is as follows. The RuvA-RuvB-RuvC complex processes Holliday junction (HJ) DNA during genetic recombination and DNA repair, while the RuvA-RuvB complex plays an important role in the rescue of blocked DNA replication forks via replication fork reversal (RFR). RuvA specifically binds to HJ cruciform DNA, conferring on it an open structure. The RuvB hexamer acts as an ATP-dependent pump, pulling dsDNA into and through the RuvAB complex. HJ branch migration allows RuvC to scan DNA until it finds its consensus sequence, where it cleaves and resolves the cruciform DNA. The chain is Holliday junction branch migration complex subunit RuvA from Burkholderia lata (strain ATCC 17760 / DSM 23089 / LMG 22485 / NCIMB 9086 / R18194 / 383).